The sequence spans 360 residues: Phospho-N-acetylmuramoyl-pentapeptide-transferase (360 aa).

A run of 10 helical transmembrane segments spans residues 21–41, 73–93, 94–114, 145–165, 168–188, 199–219, 236–256, 263–283, 288–308, and 339–359; these read YLTLRVILGTLTALMLCLWLG, TMGGAMILIAIAVSTLLWGDL, TNHYVWLVLAVTLGFGAIGWV, AVTLYLTAASPVEVSLIVPLF, VVVPLGLFYIVLTYFVIVGSS, GLAIMPTVLVAMGLAIFAYAS, AGELAVFCGTIAGAGLGFLWF, VFMGDVGALALGAALGVVAVI, IVLFIMGGVFVMETVSVMLQV, and IVRFWIITVVLVLLGLATLKI.

The protein belongs to the glycosyltransferase 4 family. MraY subfamily. Requires Mg(2+) as cofactor.

It localises to the cell inner membrane. The catalysed reaction is UDP-N-acetyl-alpha-D-muramoyl-L-alanyl-gamma-D-glutamyl-meso-2,6-diaminopimeloyl-D-alanyl-D-alanine + di-trans,octa-cis-undecaprenyl phosphate = di-trans,octa-cis-undecaprenyl diphospho-N-acetyl-alpha-D-muramoyl-L-alanyl-D-glutamyl-meso-2,6-diaminopimeloyl-D-alanyl-D-alanine + UMP. The protein operates within cell wall biogenesis; peptidoglycan biosynthesis. Functionally, catalyzes the initial step of the lipid cycle reactions in the biosynthesis of the cell wall peptidoglycan: transfers peptidoglycan precursor phospho-MurNAc-pentapeptide from UDP-MurNAc-pentapeptide onto the lipid carrier undecaprenyl phosphate, yielding undecaprenyl-pyrophosphoryl-MurNAc-pentapeptide, known as lipid I. The chain is Phospho-N-acetylmuramoyl-pentapeptide-transferase from Chromohalobacter salexigens (strain ATCC BAA-138 / DSM 3043 / CIP 106854 / NCIMB 13768 / 1H11).